The sequence spans 120 residues: Small ribosomal subunit protein eS25 (120 aa).

The disordered stretch occupies residues 1 to 32 (MPPKAGQTKKAKMEAANKGAKKTTKKWSKGQS). Residues 19–28 (GAKKTTKKWS) are compositionally biased toward basic residues.

Belongs to the eukaryotic ribosomal protein eS25 family.

This is Small ribosomal subunit protein eS25 (RPS25) from Leishmania infantum.